Here is a 378-residue protein sequence, read N- to C-terminus: Dihydroorotate dehydrogenase (quinone) (378 aa).

FMN is bound by residues 79-83 (PGYDK) and threonine 103. Residue lysine 83 coordinates substrate. 128 to 132 (NRMGF) lines the substrate pocket. Asparagine 160 and asparagine 193 together coordinate FMN. Asparagine 193 contributes to the substrate binding site. Serine 196 serves as the catalytic Nucleophile. Position 198 (asparagine 198) interacts with substrate. Residues lysine 231 and threonine 259 each contribute to the FMN site. 260–261 (NT) contacts substrate. Residues glycine 289, glycine 318, and 339–340 (YT) contribute to the FMN site.

The protein belongs to the dihydroorotate dehydrogenase family. Type 2 subfamily. In terms of assembly, monomer. It depends on FMN as a cofactor.

The protein localises to the cell membrane. It carries out the reaction (S)-dihydroorotate + a quinone = orotate + a quinol. The protein operates within pyrimidine metabolism; UMP biosynthesis via de novo pathway; orotate from (S)-dihydroorotate (quinone route): step 1/1. Catalyzes the conversion of dihydroorotate to orotate with quinone as electron acceptor. The polypeptide is Dihydroorotate dehydrogenase (quinone) (Trichodesmium erythraeum (strain IMS101)).